The following is a 191-amino-acid chain: Glutathione-independent glyoxalase DJ-1 (191 aa).

Residues Glu16, Cys111, and His130 contribute to the active site.

Belongs to the peptidase C56 family.

The protein resides in the cytoplasm. It localises to the nucleus. It carries out the reaction methylglyoxal + H2O = (R)-lactate + H(+). Its function is as follows. Catalyzes the conversion of methylglyoxal (MG) to D-lactate in a single glutathione (GSH)-independent step. May play a role in detoxifying endogenously produced glyoxals. Involved in protection against reactive oxygen species (ROS). This is Glutathione-independent glyoxalase DJ-1 from Schizosaccharomyces pombe (strain 972 / ATCC 24843) (Fission yeast).